Reading from the N-terminus, the 456-residue chain is Probable glycine dehydrogenase (decarboxylating) subunit 1 (456 aa).

Belongs to the GcvP family. N-terminal subunit subfamily. The glycine cleavage system is composed of four proteins: P, T, L and H. In this organism, the P 'protein' is a heterodimer of two subunits.

It carries out the reaction N(6)-[(R)-lipoyl]-L-lysyl-[glycine-cleavage complex H protein] + glycine + H(+) = N(6)-[(R)-S(8)-aminomethyldihydrolipoyl]-L-lysyl-[glycine-cleavage complex H protein] + CO2. In terms of biological role, the glycine cleavage system catalyzes the degradation of glycine. The P protein binds the alpha-amino group of glycine through its pyridoxal phosphate cofactor; CO(2) is released and the remaining methylamine moiety is then transferred to the lipoamide cofactor of the H protein. The sequence is that of Probable glycine dehydrogenase (decarboxylating) subunit 1 from Legionella pneumophila (strain Lens).